The following is a 468-amino-acid chain: Flavin-containing monooxygenase FMO GS-OX-like 1 (468 aa).

An FAD-binding site is contributed by 16-21; that stretch reads GLGAAG. Residue 211-216 coordinates NADP(+); it reads GSQASG.

This sequence belongs to the FMO family. The cofactor is FAD.

Its function is as follows. Catalyzes the conversion of methylthioalkyl glucosinolates of any chain length into methylsulfinylalkyl glucosinolates. In Arabidopsis thaliana (Mouse-ear cress), this protein is Flavin-containing monooxygenase FMO GS-OX-like 1.